The following is a 289-amino-acid chain: Probable acetolactate synthase small subunit (289 aa).

Ser34 is subject to Phosphoserine. Residues 72-149 form the ACT domain; that stretch reads VFNCLVQNEP…AVLDYTGTSM (78 aa).

Belongs to the acetolactate synthase small subunit family.

It localises to the cytoplasm. It participates in amino-acid biosynthesis; L-isoleucine biosynthesis; L-isoleucine from 2-oxobutanoate: step 1/4. It functions in the pathway amino-acid biosynthesis; L-valine biosynthesis; L-valine from pyruvate: step 1/4. Its function is as follows. Stimulates activity of the acetolactate synthase catalytic subunit ilv1. This chain is Probable acetolactate synthase small subunit, found in Schizosaccharomyces pombe (strain 972 / ATCC 24843) (Fission yeast).